The following is a 72-amino-acid chain: Cytochrome b-c1 complex subunit 8-2, mitochondrial (72 aa).

Residues 1-41 (MGKQPVKLKAVVYALSPFQQKIMTGLWKDLPEKIHHKVSEN) lie on the Mitochondrial matrix side of the membrane. The helical transmembrane segment at 42–58 (WISTILLVAPVVGTYSY) threads the bilayer. The Mitochondrial intermembrane portion of the chain corresponds to 59 to 72 (AQYFKEQEKLEHRF).

Belongs to the UQCRQ/QCR8 family. Component of the ubiquinol-cytochrome c oxidoreductase (cytochrome b-c1 complex, complex III, CIII), a multisubunit enzyme composed of 10 subunits. The complex is composed of 3 respiratory subunits cytochrome b (MT-CYB), cytochrome c1 (CYC1-1 or CYC1-2) and Rieske protein (UCR1-1 or UCR1-2), 2 core protein subunits MPPalpha1 (or MPPalpha2) and MPPB, and 5 low-molecular weight protein subunits QCR7-1 (or QCR7-2), UCRQ-1 (or UCRQ-2), QCR9, UCRY and probably QCR6-1 (or QCR6-2). The complex exists as an obligatory dimer and forms supercomplexes (SCs) in the inner mitochondrial membrane with NADH-ubiquinone oxidoreductase (complex I, CI), resulting in different assemblies (supercomplexes SCI(1)III(2) and SCI(2)III(4)).

The protein localises to the mitochondrion inner membrane. Component of the ubiquinol-cytochrome c oxidoreductase, a multisubunit transmembrane complex that is part of the mitochondrial electron transport chain which drives oxidative phosphorylation. The respiratory chain contains 3 multisubunit complexes succinate dehydrogenase (complex II, CII), ubiquinol-cytochrome c oxidoreductase (cytochrome b-c1 complex, complex III, CIII) and cytochrome c oxidase (complex IV, CIV), that cooperate to transfer electrons derived from NADH and succinate to molecular oxygen, creating an electrochemical gradient over the inner membrane that drives transmembrane transport and the ATP synthase. The cytochrome b-c1 complex catalyzes electron transfer from ubiquinol to cytochrome c, linking this redox reaction to translocation of protons across the mitochondrial inner membrane, with protons being carried across the membrane as hydrogens on the quinol. In the process called Q cycle, 2 protons are consumed from the matrix, 4 protons are released into the intermembrane space and 2 electrons are passed to cytochrome c. This is Cytochrome b-c1 complex subunit 8-2, mitochondrial (UCRQ-2) from Arabidopsis thaliana (Mouse-ear cress).